The following is a 201-amino-acid chain: Recombination protein RecR (201 aa).

The segment at 59–74 (CEICGNMDTENICCIC) adopts a C4-type zinc-finger fold. The Toprim domain maps to 82 to 177 (SVIAVVETVA…KISRLASGIP (96 aa)).

It belongs to the RecR family.

Its function is as follows. May play a role in DNA repair. It seems to be involved in an RecBC-independent recombinational process of DNA repair. It may act with RecF and RecO. In Rickettsia felis (strain ATCC VR-1525 / URRWXCal2) (Rickettsia azadi), this protein is Recombination protein RecR.